The primary structure comprises 180 residues: tRNA (cytidine(56)-2'-O)-methyltransferase (180 aa).

S-adenosyl-L-methionine is bound by residues leucine 82, 112-116 (GAEKV), and 130-137 (VGNQPHSE).

Belongs to the aTrm56 family. As to quaternary structure, homodimer.

The protein localises to the cytoplasm. It carries out the reaction cytidine(56) in tRNA + S-adenosyl-L-methionine = 2'-O-methylcytidine(56) in tRNA + S-adenosyl-L-homocysteine + H(+). In terms of biological role, specifically catalyzes the AdoMet-dependent 2'-O-ribose methylation of cytidine at position 56 in tRNAs. The sequence is that of tRNA (cytidine(56)-2'-O)-methyltransferase from Methanococcus vannielii (strain ATCC 35089 / DSM 1224 / JCM 13029 / OCM 148 / SB).